Reading from the N-terminus, the 151-residue chain is Meiotically up-regulated gene 114 protein (151 aa).

It is found in the cytoplasm. Functionally, has a role in meiosis. In Schizosaccharomyces pombe (strain 972 / ATCC 24843) (Fission yeast), this protein is Meiotically up-regulated gene 114 protein (mug114).